The chain runs to 252 residues: Imidazole glycerol phosphate synthase subunit HisF (252 aa).

Active-site residues include aspartate 11 and aspartate 130.

This sequence belongs to the HisA/HisF family. In terms of assembly, heterodimer of HisH and HisF.

It localises to the cytoplasm. It carries out the reaction 5-[(5-phospho-1-deoxy-D-ribulos-1-ylimino)methylamino]-1-(5-phospho-beta-D-ribosyl)imidazole-4-carboxamide + L-glutamine = D-erythro-1-(imidazol-4-yl)glycerol 3-phosphate + 5-amino-1-(5-phospho-beta-D-ribosyl)imidazole-4-carboxamide + L-glutamate + H(+). It functions in the pathway amino-acid biosynthesis; L-histidine biosynthesis; L-histidine from 5-phospho-alpha-D-ribose 1-diphosphate: step 5/9. In terms of biological role, IGPS catalyzes the conversion of PRFAR and glutamine to IGP, AICAR and glutamate. The HisF subunit catalyzes the cyclization activity that produces IGP and AICAR from PRFAR using the ammonia provided by the HisH subunit. This chain is Imidazole glycerol phosphate synthase subunit HisF, found in Dictyoglomus turgidum (strain DSM 6724 / Z-1310).